Here is a 128-residue protein sequence, read N- to C-terminus: Large ribosomal subunit protein bL12 (128 aa).

Belongs to the bacterial ribosomal protein bL12 family. Homodimer. Part of the ribosomal stalk of the 50S ribosomal subunit. Forms a multimeric L10(L12)X complex, where L10 forms an elongated spine to which 2 to 4 L12 dimers bind in a sequential fashion. Binds GTP-bound translation factors.

Functionally, forms part of the ribosomal stalk which helps the ribosome interact with GTP-bound translation factors. Is thus essential for accurate translation. The chain is Large ribosomal subunit protein bL12 from Trichormus variabilis (strain ATCC 29413 / PCC 7937) (Anabaena variabilis).